Reading from the N-terminus, the 346-residue chain is Phosphate acyltransferase (346 aa).

This sequence belongs to the PlsX family. In terms of assembly, homodimer. Probably interacts with PlsY.

Its subcellular location is the cytoplasm. It catalyses the reaction a fatty acyl-[ACP] + phosphate = an acyl phosphate + holo-[ACP]. The protein operates within lipid metabolism; phospholipid metabolism. In terms of biological role, catalyzes the reversible formation of acyl-phosphate (acyl-PO(4)) from acyl-[acyl-carrier-protein] (acyl-ACP). This enzyme utilizes acyl-ACP as fatty acyl donor, but not acyl-CoA. The protein is Phosphate acyltransferase of Deinococcus geothermalis (strain DSM 11300 / CIP 105573 / AG-3a).